Reading from the N-terminus, the 226-residue chain is Glutathione S-transferase kappa 1 (226 aa).

Position 16–18 (16–18) interacts with glutathione; the sequence is SPY. K49 carries the N6-succinyllysine modification. Residue N53 coordinates glutathione. N6-acetyllysine is present on residues K71 and K85. K116 is modified (N6-acetyllysine; alternate). K116 is modified (N6-succinyllysine; alternate). K144 is modified (N6-succinyllysine). K158 is subject to N6-acetyllysine; alternate. N6-succinyllysine; alternate is present on K158. N6-acetyllysine occurs at positions 165 and 169. Glutathione-binding positions include L183 and 200–201; that span reads SD.

It belongs to the GST superfamily. Kappa family. As to quaternary structure, homodimer. In terms of tissue distribution, ubiquitous.

Its subcellular location is the peroxisome. It catalyses the reaction RX + glutathione = an S-substituted glutathione + a halide anion + H(+). In terms of biological role, glutathione S-transferase that catalyzes the conjugation of glutathione to exogenous and endogenous compounds. Significant glutathione conjugating activity is found only with the model substrate, 1-chloro-2,4-dinitrobenzene (CDNB). The chain is Glutathione S-transferase kappa 1 (GSTK1) from Homo sapiens (Human).